Consider the following 461-residue polypeptide: Fumarate hydratase class II (461 aa).

Substrate contacts are provided by residues 97 to 99 (SGT), 127 to 130 (HPND), 137 to 139 (SSN), and Thr-185. His-186 functions as the Proton donor/acceptor in the catalytic mechanism. Ser-316 is an active-site residue. Residues Ser-317 and 322–324 (KVN) contribute to the substrate site.

It belongs to the class-II fumarase/aspartase family. Fumarase subfamily. As to quaternary structure, homotetramer.

The protein resides in the cytoplasm. It catalyses the reaction (S)-malate = fumarate + H2O. The protein operates within carbohydrate metabolism; tricarboxylic acid cycle; (S)-malate from fumarate: step 1/1. Involved in the TCA cycle. Catalyzes the stereospecific interconversion of fumarate to L-malate. The chain is Fumarate hydratase class II from Oceanobacillus iheyensis (strain DSM 14371 / CIP 107618 / JCM 11309 / KCTC 3954 / HTE831).